The chain runs to 271 residues: Phosphatidylglycerol--prolipoprotein diacylglyceryl transferase (271 aa).

4 helical membrane-spanning segments follow: residues 25-45 (WYGIMYVIALLLALLLAKFFV), 60-80 (YFIWVEIGVILGARLGYILIY), 103-123 (FVGIRGMSYHGAIIGFLIATL), and 131-151 (ANPWIFLDLVALSVPLAYVFG). A 1,2-diacyl-sn-glycero-3-phospho-(1'-sn-glycerol) is bound at residue R152. 3 consecutive transmembrane segments (helical) span residues 181–201 (PSQLYEAFLEGIVVFIIVYLA), 209–229 (GELILVYAGAYSLARFICEFY), and 235–255 (GIGFVLWGMSMGQILSFIMFI).

The protein belongs to the Lgt family.

It is found in the cell inner membrane. It carries out the reaction L-cysteinyl-[prolipoprotein] + a 1,2-diacyl-sn-glycero-3-phospho-(1'-sn-glycerol) = an S-1,2-diacyl-sn-glyceryl-L-cysteinyl-[prolipoprotein] + sn-glycerol 1-phosphate + H(+). It participates in protein modification; lipoprotein biosynthesis (diacylglyceryl transfer). Functionally, catalyzes the transfer of the diacylglyceryl group from phosphatidylglycerol to the sulfhydryl group of the N-terminal cysteine of a prolipoprotein, the first step in the formation of mature lipoproteins. The sequence is that of Phosphatidylglycerol--prolipoprotein diacylglyceryl transferase from Campylobacter jejuni (strain RM1221).